The chain runs to 148 residues: Large-conductance mechanosensitive channel (148 aa).

Transmembrane regions (helical) follow at residues 14–34 (VVDMAVGIIIGAAFTTIINTL) and 85–105 (GIFVNACISFLIVTFVMFLSV).

Belongs to the MscL family. Homopentamer.

The protein resides in the cell inner membrane. Channel that opens in response to stretch forces in the membrane lipid bilayer. May participate in the regulation of osmotic pressure changes within the cell. This chain is Large-conductance mechanosensitive channel, found in Chlorobium phaeobacteroides (strain DSM 266 / SMG 266 / 2430).